We begin with the raw amino-acid sequence, 486 residues long: Malonate-semialdehyde dehydrogenase (486 aa).

Phe154, Lys178, Glu181, Arg182, and Ser231 together coordinate NAD(+). The active-site Nucleophile is Cys286. Glu386 serves as a coordination point for NAD(+).

Belongs to the aldehyde dehydrogenase family. IolA subfamily. As to quaternary structure, homotetramer.

It carries out the reaction 3-oxopropanoate + NAD(+) + CoA + H2O = hydrogencarbonate + acetyl-CoA + NADH + H(+). It catalyses the reaction 2-methyl-3-oxopropanoate + NAD(+) + CoA + H2O = propanoyl-CoA + hydrogencarbonate + NADH + H(+). The protein operates within polyol metabolism; myo-inositol degradation into acetyl-CoA; acetyl-CoA from myo-inositol: step 7/7. Catalyzes the oxidation of malonate semialdehyde (MSA) and methylmalonate semialdehyde (MMSA) into acetyl-CoA and propanoyl-CoA, respectively. Is involved in a myo-inositol catabolic pathway. Bicarbonate, and not CO2, is the end-product of the enzymatic reaction. The protein is Malonate-semialdehyde dehydrogenase of Bacillus pumilus (strain SAFR-032).